We begin with the raw amino-acid sequence, 155 residues long: NADPH-dependent 7-cyano-7-deazaguanine reductase (155 aa).

Cys53 acts as the Thioimide intermediate in catalysis. Asp60 serves as the catalytic Proton donor. Substrate is bound by residues 75–77 and 94–95; these read VES and HE.

The protein belongs to the GTP cyclohydrolase I family. QueF type 1 subfamily.

The protein resides in the cytoplasm. It carries out the reaction 7-aminomethyl-7-carbaguanine + 2 NADP(+) = 7-cyano-7-deazaguanine + 2 NADPH + 3 H(+). It participates in tRNA modification; tRNA-queuosine biosynthesis. Its function is as follows. Catalyzes the NADPH-dependent reduction of 7-cyano-7-deazaguanine (preQ0) to 7-aminomethyl-7-deazaguanine (preQ1). The chain is NADPH-dependent 7-cyano-7-deazaguanine reductase from Brucella suis (strain ATCC 23445 / NCTC 10510).